The sequence spans 265 residues: Isoprenyl transferase (265 aa).

Asp35 is an active-site residue. Mg(2+) is bound at residue Asp35. Residues 36–39, Trp40, Arg48, His52, and 80–82 each bind substrate; these read GNGR and STE. Asn83 acts as the Proton acceptor in catalysis. Substrate contacts are provided by residues Trp84, Arg86, Arg203, and 209–211; that span reads RIS. Mg(2+) is bound at residue Glu222.

Belongs to the UPP synthase family. Homodimer. The cofactor is Mg(2+).

Functionally, catalyzes the condensation of isopentenyl diphosphate (IPP) with allylic pyrophosphates generating different type of terpenoids. This Prochlorococcus marinus (strain MIT 9313) protein is Isoprenyl transferase.